We begin with the raw amino-acid sequence, 172 residues long: Protein-export protein SecB (172 aa).

A disordered region spans residues 1–22 (MADETSADINNPALQPNGEDTS). Residues 7 to 20 (ADINNPALQPNGED) show a composition bias toward polar residues.

The protein belongs to the SecB family. Homotetramer, a dimer of dimers. One homotetramer interacts with 1 SecA dimer.

The protein localises to the cytoplasm. One of the proteins required for the normal export of preproteins out of the cell cytoplasm. It is a molecular chaperone that binds to a subset of precursor proteins, maintaining them in a translocation-competent state. It also specifically binds to its receptor SecA. The chain is Protein-export protein SecB from Sphingopyxis alaskensis (strain DSM 13593 / LMG 18877 / RB2256) (Sphingomonas alaskensis).